The primary structure comprises 79 residues: D-alanyl carrier protein (79 aa).

The Carrier domain occupies 1–77 (MDTKQAVLDI…KIIAKVESLR (77 aa)). An O-(pantetheine 4'-phosphoryl)serine modification is found at S35.

The protein belongs to the DltC family. Post-translationally, 4'-phosphopantetheine is transferred from CoA to a specific serine of apo-DCP.

The protein localises to the cytoplasm. It participates in cell wall biogenesis; lipoteichoic acid biosynthesis. In terms of biological role, carrier protein involved in the D-alanylation of lipoteichoic acid (LTA). The loading of thioester-linked D-alanine onto DltC is catalyzed by D-alanine--D-alanyl carrier protein ligase DltA. The DltC-carried D-alanyl group is further transferred to cell membrane phosphatidylglycerol (PG) by forming an ester bond, probably catalyzed by DltD. D-alanylation of LTA plays an important role in modulating the properties of the cell wall in Gram-positive bacteria, influencing the net charge of the cell wall. In Lactobacillus gasseri (strain ATCC 33323 / DSM 20243 / BCRC 14619 / CIP 102991 / JCM 1131 / KCTC 3163 / NCIMB 11718 / NCTC 13722 / AM63), this protein is D-alanyl carrier protein.